The following is a 503-amino-acid chain: Excitatory amino acid transporter (503 aa).

The Cytoplasmic portion of the chain corresponds to M1–K18. Helical transmembrane passes span N19–L39, L59–L79, and T96–I116. The Extracellular segment spans residues H117–E198. N-linked (GlcNAc...) asparagine glycosylation is found at N177 and N187. 5 helical membrane passes run Y199–L219, V239–I259, V281–V301, A369–V389, and I400–V420.

Belongs to the dicarboxylate/amino acid:cation symporter (DAACS) (TC 2.A.23) family.

It is found in the membrane. Functionally, transports L-glutamate and also L- and D-aspartate. Essential for terminating the postsynaptic action of glutamate by rapidly removing released glutamate from the synaptic cleft. Acts as a symport by cotransporting sodium. The sequence is that of Excitatory amino acid transporter (glt-1) from Caenorhabditis elegans.